Here is a 388-residue protein sequence, read N- to C-terminus: Fetuin-B (388 aa).

The first 18 residues, Met-1–Ala-18, serve as a signal peptide directing secretion. 2 Cystatin fetuin-B-type domains span residues Gln-28–Thr-141 and Thr-152–Glu-264. N-linked (GlcNAc...) asparagine glycosylation occurs at Asn-40. 5 disulfides stabilise this stretch: Cys-96-Cys-107, Cys-120-Cys-140, Cys-154-Cys-157, Cys-217-Cys-224, and Cys-237-Cys-263. The N-linked (GlcNAc...) asparagine glycan is linked to Asn-139. Disordered stretches follow at residues Ala-270–Asp-343 and Lys-367–Pro-388. The span at Ala-279 to Val-300 shows a compositional bias: polar residues. 2 O-linked (GalNAc...) threonine glycosylation sites follow: Thr-292 and Thr-295. At Ser-321 the chain carries Phosphoserine. Over residues Lys-367–Asn-381 the composition is skewed to basic and acidic residues.

The protein belongs to the fetuin family. As to expression, liver, lung and tongue.

The protein resides in the secreted. In terms of biological role, protease inhibitor required for egg fertilization. Required to prevent premature zona pellucida hardening before fertilization, probably by inhibiting the protease activity of ASTL, a protease that mediates the cleavage of ZP2 and triggers zona pellucida hardening. This chain is Fetuin-B (Fetub), found in Mus musculus (Mouse).